Consider the following 191-residue polypeptide: GDP-mannose pyrophosphatase (191 aa).

GDP-alpha-D-mannose is bound by residues Tyr17, 38–40, Arg67, and 85–87; these read KRE and AGL. A Nudix hydrolase domain is found at 43 to 180; that stretch reads DRGNGATILL…EIRDGKTVLL (138 aa). Mg(2+) contacts are provided by Ala85, Glu100, and Glu104. The short motif at 86–106 is the Nudix box element; sequence GLLDNDEPEVCIRKEAIEETG. GDP-alpha-D-mannose contacts are provided by residues Glu104, Glu127, 150–151, and Lys176; that span reads DE. Mg(2+) is bound at residue Glu151.

The protein belongs to the Nudix hydrolase family. NudK subfamily. Homodimer. The cofactor is Mg(2+).

The enzyme catalyses GDP-alpha-D-mannose + H2O = alpha-D-mannose 1-phosphate + GMP + 2 H(+). Nucleoside diphosphate sugar hydrolase that hydrolyzes GDP-mannose as its preferred substrate, yielding GMP and mannose-1-phosphate. This chain is GDP-mannose pyrophosphatase (nudK), found in Escherichia coli (strain UTI89 / UPEC).